The following is a 982-amino-acid chain: Serine/threonine-protein kinase SULU (982 aa).

The region spanning Tyr30–Ile289 is the Protein kinase domain. Residues Ile36–Val44 and Lys59 contribute to the ATP site. The active-site Proton acceptor is Asp153. Disordered regions lie at residues Gly331 to Thr484, Gln592 to Gln620, Leu751 to Lys789, and Arg957 to Met982. The segment covering Ser353–Ser373 has biased composition (low complexity). Residues Gln421–Val431 are compositionally biased toward polar residues. Positions Ile459–Ser472 are enriched in low complexity. The span at Glu595–Lys608 shows a compositional bias: basic and acidic residues. Polar residues predominate over residues Ser759–Arg768. Residues Arg957–Gly967 are compositionally biased toward low complexity. The span at Gly973–Met982 shows a compositional bias: polar residues.

It belongs to the protein kinase superfamily. Ser/Thr protein kinase family. STE20 subfamily. Requires Mg(2+) as cofactor. Expressed in the pharynx, including the pharyngeal muscle of the metacorpus, the isthmus, and the terminal bulb; in the intestine, including the pharyngeointestinal valve between the pharynx and the intestine, a structure near the anus likely to be the anal sphincter and the excretory cell and in several ring neurons.

It localises to the cytoplasm. The protein resides in the cytoskeleton. The protein localises to the cell cortex. The catalysed reaction is L-seryl-[protein] + ATP = O-phospho-L-seryl-[protein] + ADP + H(+). The enzyme catalyses L-threonyl-[protein] + ATP = O-phospho-L-threonyl-[protein] + ADP + H(+). Its function is as follows. Acts as a negative regulator of cortical contractions during early embryonic cell division, possibly by regulating rho-1-dependent actomyosin contractility. Plays a role in polarity establishment in early embryos by regulating the size of the anterior and posterior cortex in the first asymmetric cell division. Might play a role in cell cycle progression. In the germline, involved in the regulation of meiotic progression during oogenesis, possibly by modulating the timing of mpk-1 activation. Plays a role in meiotic recombination events. Involved in pharyngeal pumping. The chain is Serine/threonine-protein kinase SULU (kin-18) from Caenorhabditis elegans.